A 353-amino-acid chain; its full sequence is MKIAVDAMGGDHAPEALIEGALLAGPQCSADILVIGNEARLSSLLAHSGDSTSLKVVHAPQVIGMGEAGPMALRRKREASLTIAMRLLAENEVDAVVSAGNSSAVVSAARHLVGLIPGLRRPAMAVPLPTPSGKLLLLDAGAHAEATAIHLAQSAVLAHCYLKIEEGLNRPRIGLLNIGHEPAKGNRAVQRAFALLRRCSLEFTGNVEPNDLFAGKVDAVICDGFVGNVLLKMYEGFSETVCRFLESLANHDGRDFSGGAGRILERFRRDYHYEFVGGAPLLGIRKTVVAAHGRSRATAIANAIRLACRLQEARVFERLAGIVEEDGALTELRHQNTLLMIDQLKDKWGFAHR.

Belongs to the PlsX family. As to quaternary structure, homodimer. Probably interacts with PlsY.

The protein resides in the cytoplasm. It carries out the reaction a fatty acyl-[ACP] + phosphate = an acyl phosphate + holo-[ACP]. It functions in the pathway lipid metabolism; phospholipid metabolism. In terms of biological role, catalyzes the reversible formation of acyl-phosphate (acyl-PO(4)) from acyl-[acyl-carrier-protein] (acyl-ACP). This enzyme utilizes acyl-ACP as fatty acyl donor, but not acyl-CoA. This chain is Phosphate acyltransferase, found in Syntrophobacter fumaroxidans (strain DSM 10017 / MPOB).